The primary structure comprises 370 residues: UDP-N-acetylglucosamine--N-acetylmuramyl-(pentapeptide) pyrophosphoryl-undecaprenol N-acetylglucosamine transferase (370 aa).

UDP-N-acetyl-alpha-D-glucosamine is bound by residues Thr20–Gly22, Asn134, Arg170, Ser204, Ile257, and Gln301.

Belongs to the glycosyltransferase 28 family. MurG subfamily.

It is found in the cell membrane. The catalysed reaction is di-trans,octa-cis-undecaprenyl diphospho-N-acetyl-alpha-D-muramoyl-L-alanyl-D-glutamyl-meso-2,6-diaminopimeloyl-D-alanyl-D-alanine + UDP-N-acetyl-alpha-D-glucosamine = di-trans,octa-cis-undecaprenyl diphospho-[N-acetyl-alpha-D-glucosaminyl-(1-&gt;4)]-N-acetyl-alpha-D-muramoyl-L-alanyl-D-glutamyl-meso-2,6-diaminopimeloyl-D-alanyl-D-alanine + UDP + H(+). It functions in the pathway cell wall biogenesis; peptidoglycan biosynthesis. Its function is as follows. Cell wall formation. Catalyzes the transfer of a GlcNAc subunit on undecaprenyl-pyrophosphoryl-MurNAc-pentapeptide (lipid intermediate I) to form undecaprenyl-pyrophosphoryl-MurNAc-(pentapeptide)GlcNAc (lipid intermediate II). This is UDP-N-acetylglucosamine--N-acetylmuramyl-(pentapeptide) pyrophosphoryl-undecaprenol N-acetylglucosamine transferase from Corynebacterium jeikeium (strain K411).